A 326-amino-acid polypeptide reads, in one-letter code: Homocysteine S-methyltransferase 1 (326 aa).

The 315-residue stretch at 9 to 323 (LLEDLIEKCG…STIKAISRDL (315 aa)) folds into the Hcy-binding domain. 3 residues coordinate Zn(2+): cysteine 241, cysteine 308, and cysteine 309.

Requires Zn(2+) as cofactor. In terms of tissue distribution, expressed in roots, young leaves, florets and flowers. Not detected in old leaves.

It carries out the reaction S-methyl-L-methionine + L-homocysteine = 2 L-methionine + H(+). Inhibited by L-methionine. Its function is as follows. Catalyzes methyl transfer from S-methylmethionine to homocysteine. The highest preference is for DL-homocysteine &gt;&gt; DL-cysteine. Has no selenocysteine methyltransferase activity. This is Homocysteine S-methyltransferase 1 (HMT1) from Brassica oleracea var. italica (Broccoli).